A 187-amino-acid chain; its full sequence is Endoribonuclease YbeY (187 aa).

Zn(2+)-binding residues include histidine 148, histidine 152, and histidine 158.

This sequence belongs to the endoribonuclease YbeY family. Requires Zn(2+) as cofactor.

Its subcellular location is the cytoplasm. Single strand-specific metallo-endoribonuclease involved in late-stage 70S ribosome quality control and in maturation of the 3' terminus of the 16S rRNA. The chain is Endoribonuclease YbeY from Ralstonia nicotianae (strain ATCC BAA-1114 / GMI1000) (Ralstonia solanacearum).